Consider the following 186-residue polypeptide: tRNA (cytidine(56)-2'-O)-methyltransferase (186 aa).

Residues Leu-84 and 110 to 114 (GAEKV) contribute to the S-adenosyl-L-methionine site.

Belongs to the aTrm56 family. Homodimer.

The protein localises to the cytoplasm. It catalyses the reaction cytidine(56) in tRNA + S-adenosyl-L-methionine = 2'-O-methylcytidine(56) in tRNA + S-adenosyl-L-homocysteine + H(+). Specifically catalyzes the AdoMet-dependent 2'-O-ribose methylation of cytidine at position 56 in tRNAs. The protein is tRNA (cytidine(56)-2'-O)-methyltransferase of Staphylothermus marinus (strain ATCC 43588 / DSM 3639 / JCM 9404 / F1).